A 141-amino-acid polypeptide reads, in one-letter code: Flagellar assembly factor FliW 1 (141 aa).

The protein belongs to the FliW family. As to quaternary structure, interacts with translational regulator CsrA and flagellin(s).

It is found in the cytoplasm. Functionally, acts as an anti-CsrA protein, binds CsrA and prevents it from repressing translation of its target genes, one of which is flagellin. Binds to flagellin and participates in the assembly of the flagellum. In Desulfotalea psychrophila (strain LSv54 / DSM 12343), this protein is Flagellar assembly factor FliW 1.